A 344-amino-acid chain; its full sequence is MENWINVNNASEDIVLSSRIRLARNLKGIPFPNKLTVDSAKDVVEKVENAIFTIPDLKDNLKSNHLWENDNETNKMYLEKHLISRGLIKHAKGSAFLIDNDETISIMINEEDHLRLQTITSGLNFKEVFKSINELDDLLEENLEYAFHEKLGYITACPTNLGTGLRASAMVHLPALTANKDIVKILNGITQLGMTIRGLYGEGSKAYGNLYQISNQITLGRAEEQIITSLEGIVKQIIQQERLARERMKTKYKYEVEDKIFRSLGVLKSARILTAREVLNLLSNVRLGVEEGIISNIDKSILNNLLINTQSASIKKSSQKKLTDIEEKIERAKIVKEGLKGIEL.

The Phosphagen kinase C-terminal domain maps to 14 to 244 (IVLSSRIRLA…KQIIQQERLA (231 aa)). Residues 17–21 (SSRIR), His-81, Arg-115, 166–170 (RASAM), and 197–202 (RGLYGE) each bind ATP.

The protein belongs to the ATP:guanido phosphotransferase family.

It catalyses the reaction L-arginyl-[protein] + ATP = N(omega)-phospho-L-arginyl-[protein] + ADP + H(+). Its function is as follows. Catalyzes the specific phosphorylation of arginine residues in proteins. The polypeptide is Protein-arginine kinase (Clostridium novyi (strain NT)).